The sequence spans 286 residues: NADP-dependent dehydrogenase clz5 (286 aa).

Ser-49, Leu-51, Asp-93, Tyr-207, Lys-211, Ile-241, and Gln-245 together coordinate NADP(+). The Proton acceptor role is filled by Tyr-207. Catalysis depends on Tyr-207, which acts as the Proton donor. The active-site Lowers pKa of active site Tyr is Lys-211.

This sequence belongs to the short-chain dehydrogenases/reductases (SDR) family. Homodimer.

It is found in the cytoplasm. It localises to the cytosol. The protein operates within secondary metabolite biosynthesis. Functionally, NADP-dependent dehydrogenase; part of the gene cluster that mediates the biosynthesis of squalestatin S1 (SQS1, also known as zaragozic acid A), a heavily oxidized fungal polyketide that offers potent cholesterol lowering activity by targeting squalene synthase (SS). SQS1 is composed of a 2,8-dioxobicyclic[3.2.1]octane-3,4,5-tricarboxyclic acid core that is connected to two lipophilic polyketide arms. These initial steps feature the priming of an unusual benzoic acid starter unit onto the highly reducing polyketide synthase clz14, followed by oxaloacetate extension and product release to generate a tricarboxylic acid containing product. The phenylalanine ammonia lyase (PAL) clz10 and the acyl-CoA ligase clz12 are involved in transforming phenylalanine into benzoyl-CoA. The citrate synthase-like protein clz17 is involved in connecting the C-alpha-carbons of the hexaketide chain and oxaloacetate to afford the tricarboxylic acid unit. The potential hydrolytic enzymes, clz11 and clz13, are in close proximity to pks2 and may participate in product release. On the other side, the tetraketide arm is synthesized by a the squalestatin tetraketide synthase clz2 and enzymatically esterified to the core in the last biosynthetic step, by the acetyltransferase clz6. The biosynthesis of the tetraketide must involve 3 rounds of chain extension. After the first and second rounds methyl-transfer occurs, and in all rounds of extension the ketoreductase and dehydratase are active. The enoyl reductase and C-MeT of clz2 are not active in the final round of extension. The acetyltransferase clz6 appears to have a broad substrate selectivity for its acyl CoA substrate, allowing the in vitro synthesis of novel squalestatins. The biosynthesis of SQS1 requires several oxidative steps likely performed by oxidoreductases clz3, clz15 and clz16. Finally, in support of the identification of the cluster as being responsible for SQS1 production, the cluster contains a gene encoding a putative squalene synthase (SS) clz20, suggesting a likely mechanism for self-resistance. The sequence is that of NADP-dependent dehydrogenase clz5 from Cochliobolus lunatus (Filamentous fungus).